Here is a 448-residue protein sequence, read N- to C-terminus: Phosphoglucosamine mutase (448 aa).

Serine 100 serves as the catalytic Phosphoserine intermediate. Mg(2+)-binding residues include serine 100, aspartate 240, aspartate 242, and aspartate 244. The residue at position 100 (serine 100) is a Phosphoserine.

Belongs to the phosphohexose mutase family. Mg(2+) serves as cofactor. Activated by phosphorylation.

The catalysed reaction is alpha-D-glucosamine 1-phosphate = D-glucosamine 6-phosphate. In terms of biological role, catalyzes the conversion of glucosamine-6-phosphate to glucosamine-1-phosphate. This Clostridium perfringens (strain ATCC 13124 / DSM 756 / JCM 1290 / NCIMB 6125 / NCTC 8237 / Type A) protein is Phosphoglucosamine mutase.